The chain runs to 1984 residues: Vitellogenin receptor Yl (1984 aa).

The segment covering 1 to 19 (MCQAEHQVHPSEQRIRVES) has biased composition (basic and acidic residues). Residues 1 to 48 (MCQAEHQVHPSEQRIRVESPKMTASRRGFNLTSQTRAHPSSGGSTSSR) form a disordered region. Residue Asn-30 is glycosylated (N-linked (GlcNAc...) asparagine). Residues 30–48 (NLTSQTRAHPSSGGSTSSR) show a composition bias toward polar residues. 5 consecutive LDL-receptor class A domains span residues 89 to 125 (RCDAGQFQCRDGGCILQAKMCDGRGDCKDSSDELDCD), 128 to 167 (LCRPPHWFPCAQPHGACLAAELMCNGIDNCPGGEDELNCP), 183 to 221 (SCSKYEFMCQQDRTCIPIDFMCDGRPDCTDKSDEVAGCK), 226 to 263 (TCPGEGHLCANGRCLRRKQWVCDGVDDCGDGSDERGCL), and 265 to 305 (LCEP…DLCH). 20 disulfide bridges follow: Cys-90–Cys-102, Cys-97–Cys-115, Cys-109–Cys-124, Cys-129–Cys-144, Cys-137–Cys-157, Cys-151–Cys-166, Cys-184–Cys-197, Cys-191–Cys-210, Cys-204–Cys-220, Cys-227–Cys-239, Cys-234–Cys-253, Cys-247–Cys-262, Cys-266–Cys-281, Cys-275–Cys-294, Cys-288–Cys-304, Cys-310–Cys-321, Cys-315–Cys-331, Cys-352–Cys-363, Cys-359–Cys-372, and Cys-374–Cys-387. The EGF-like 1 domain maps to 306-343 (SKPDCDAKKCALGAKCHMMPASGAECFCPKGFRLAKFE). Residues 348-388 (DVDECKEQDDLCSQGCENTSGGYRCVCDAGYLLDKDNRTCR) enclose the EGF-like 2; calcium-binding domain. Asn-365, Asn-384, and Asn-429 each carry an N-linked (GlcNAc...) asparagine glycan. LDL-receptor class B repeat units follow at residues 441–485 (SHIY…DWLT), 486–528 (QNIY…WPQK), 529–572 (GLMF…DMHQ), and 573–615 (QRIY…FEDQ). Asn-666, Asn-749, and Asn-782 each carry an N-linked (GlcNAc...) asparagine glycan. LDL-receptor class B repeat units follow at residues 750 to 792 (GSLI…DHLS), 793 to 836 (RNLY…MPAE), 884 to 925 (QTIF…VHHD), and 934 to 940 (PRIYWTH). N-linked (GlcNAc...) asparagine glycosylation is present at Asn-1022. 5 consecutive LDL-receptor class A domains span residues 1024–1063 (TCVEALDCEFRCHSGECLTMNHRCNGRRDCVDNSDEMNCD), 1073–1110 (LCSPNQFACHSGEQCVDKERRCDNRKDCHDHSDEQHCE), 1117–1153 (KCHVHQHGCDNGKCVDSSLVCDGTNDCGDNSDELLCE), 1157–1194 (RCEPGMFQCGSGSCIAGSWECDGRIDCSDGSDEHDKCV), and 1197–1233 (SCPPDMQRCLLGQCLDRSLVCDGHNDCGDKSDELNCG). Cystine bridges form between Cys-1025/Cys-1040, Cys-1035/Cys-1053, Cys-1047/Cys-1062, Cys-1074/Cys-1087, Cys-1081/Cys-1100, Cys-1094/Cys-1109, Cys-1118/Cys-1130, Cys-1125/Cys-1143, Cys-1137/Cys-1152, Cys-1158/Cys-1170, Cys-1165/Cys-1183, Cys-1177/Cys-1193, Cys-1198/Cys-1210, Cys-1205/Cys-1223, and Cys-1217/Cys-1232. N-linked (GlcNAc...) asparagine glycosylation is present at Asn-1240. 2 consecutive LDL-receptor class A domains span residues 1242–1280 (SCAEDQYQCTSNLKICLPSTVRCNGTTECPRGEDEADCG) and 1282–1319 (VCSIYEFKCRSGRECIRREFRCDGQKDCGDGSDELSCE). 6 disulfide bridges follow: Cys-1243-Cys-1257, Cys-1250-Cys-1270, Cys-1264-Cys-1279, Cys-1283-Cys-1296, Cys-1290-Cys-1309, and Cys-1303-Cys-1318. Asn-1265 carries an N-linked (GlcNAc...) asparagine glycan. A glycan (N-linked (GlcNAc...) asparagine) is linked at Asn-1326. The region spanning 1339–1376 (SCRPHLFDCQDGECVDLSRVCNNFPDCTNGHDEGPKCA) is the LDL-receptor class A 13 domain. 5 cysteine pairs are disulfide-bonded: Cys-1340–Cys-1352, Cys-1347–Cys-1365, Cys-1359–Cys-1375, Cys-1422–Cys-1432, and Cys-1428–Cys-1441. The 36-residue stretch at 1418 to 1453 (DIDECQEQQPCAQLCENTLGGYQCQCHADFMLRQDR) folds into the EGF-like 3; calcium-binding domain. N-linked (GlcNAc...) asparagine glycans are attached at residues Asn-1475 and Asn-1490. 2 LDL-receptor class B repeats span residues 1588 to 1637 (ARIF…DPHQ) and 1638 to 1687 (QLLY…YENN). A helical transmembrane segment spans residues 1800-1820 (WLMALFVLAAGSLIAGLGYMY). At 1821–1984 (YQYRQRGHTD…GNDANARFVS (164 aa)) the chain is on the cytoplasmic side. A Phosphoserine modification is found at Ser-1926. Disordered stretches follow at residues 1927–1951 (KLHALDGGGAGGDGDGGRGVGRQVP) and 1965–1984 (SAGQFGGNYAGNDANARFVS). Positions 1932–1946 (DGGGAGGDGDGGRGV) are enriched in gly residues.

It belongs to the LDLR family. As to quaternary structure, interacts with osk (isoform A). In terms of tissue distribution, ovary.

Its subcellular location is the cell membrane. The protein localises to the cytoplasm. It localises to the cell cortex. It is found in the cytoplasmic vesicle. The protein resides in the clathrin-coated vesicle membrane. Its subcellular location is the early endosome membrane. The protein localises to the endosome. It localises to the multivesicular body lumen. Cell surface receptor involved in uptake of vitellogenins (yolk proteins) into developing oocytes by receptor-mediated endocytosis. May also mediate uptake of apolpp/apolipophorins and their incorporation into yolk granules. Along with its ligands, required for maintenance of microtubule plus-end orientation towards the posterior pole of oocytes. Involved in polarized localization of germ plasm components, such as osk mRNA and vas protein, to the oocyte posterior cortex. Receptor-mediated endocytosis of vitellogenin receptor ligands is critical for osk (isoform A) mediated actin reorganization and the anchoring of germ plasm components to the oocyte cortex. This is Vitellogenin receptor Yl from Drosophila melanogaster (Fruit fly).